The sequence spans 192 residues: Large ribosomal subunit protein uL5 (192 aa).

The protein belongs to the universal ribosomal protein uL5 family. As to quaternary structure, part of the 50S ribosomal subunit; part of the 5S rRNA/L5/L18/L25 subcomplex. Contacts the 5S rRNA and the P site tRNA. Forms a bridge to the 30S subunit in the 70S ribosome.

This is one of the proteins that bind and probably mediate the attachment of the 5S RNA into the large ribosomal subunit, where it forms part of the central protuberance. In the 70S ribosome it contacts protein S13 of the 30S subunit (bridge B1b), connecting the 2 subunits; this bridge is implicated in subunit movement. Contacts the P site tRNA; the 5S rRNA and some of its associated proteins might help stabilize positioning of ribosome-bound tRNAs. The protein is Large ribosomal subunit protein uL5 of Zymomonas mobilis subsp. mobilis (strain ATCC 31821 / ZM4 / CP4).